Here is a 371-residue protein sequence, read N- to C-terminus: Alginate lyase (371 aa).

The N-terminal stretch at 1-26 (MQSTDLKRLLIPSLLGLAIVTGSAQA) is a signal peptide. Substrate contacts are provided by residues 67–68 (SK), 140–141 (HT), and Y258.

Belongs to the polysaccharide lyase 5 family.

The protein resides in the periplasm. It catalyses the reaction Eliminative cleavage of alginate to give oligosaccharides with 4-deoxy-alpha-L-erythro-hex-4-enuronosyl groups at their non-reducing ends and beta-D-mannuronate at their reducing end.. In terms of biological role, catalyzes the depolymerization of alginate by cleaving the beta-1,4 glycosidic bond between two adjacent sugar residues via a beta-elimination mechanism. May serve to degrade mislocalized alginate that is trapped in the periplasmic space. This Pseudomonas fluorescens (strain ATCC BAA-477 / NRRL B-23932 / Pf-5) protein is Alginate lyase.